The primary structure comprises 435 residues: NADH-quinone oxidoreductase subunit D 2 (435 aa).

This sequence belongs to the complex I 49 kDa subunit family. As to quaternary structure, NDH-1 is composed of 14 different subunits. Subunits NuoB, C, D, E, F, and G constitute the peripheral sector of the complex.

The protein resides in the cell inner membrane. It carries out the reaction a quinone + NADH + 5 H(+)(in) = a quinol + NAD(+) + 4 H(+)(out). In terms of biological role, NDH-1 shuttles electrons from NADH, via FMN and iron-sulfur (Fe-S) centers, to quinones in the respiratory chain. The immediate electron acceptor for the enzyme in this species is believed to be ubiquinone. Couples the redox reaction to proton translocation (for every two electrons transferred, four hydrogen ions are translocated across the cytoplasmic membrane), and thus conserves the redox energy in a proton gradient. This is NADH-quinone oxidoreductase subunit D 2 from Stenotrophomonas maltophilia (strain R551-3).